The following is a 196-amino-acid chain: Peptidyl-tRNA hydrolase (196 aa).

Residue tyrosine 18 participates in tRNA binding. Residue histidine 23 is the Proton acceptor of the active site. Positions 69, 71, and 117 each coordinate tRNA.

Belongs to the PTH family. In terms of assembly, monomer.

The protein resides in the cytoplasm. The catalysed reaction is an N-acyl-L-alpha-aminoacyl-tRNA + H2O = an N-acyl-L-amino acid + a tRNA + H(+). In terms of biological role, hydrolyzes ribosome-free peptidyl-tRNAs (with 1 or more amino acids incorporated), which drop off the ribosome during protein synthesis, or as a result of ribosome stalling. Functionally, catalyzes the release of premature peptidyl moieties from peptidyl-tRNA molecules trapped in stalled 50S ribosomal subunits, and thus maintains levels of free tRNAs and 50S ribosomes. This Vibrio cholerae serotype O1 (strain ATCC 39315 / El Tor Inaba N16961) protein is Peptidyl-tRNA hydrolase.